The chain runs to 913 residues: MTDVNKTQIIDYDGHIIDNLKEWMNNNKLSKLGFNYNVIAILGSQSSGKSTLLNNLFKTSFDVMNTKLGHSQTTQGLWLSYDKFEDELTDASNEETDVEPQNKSNNKHVINPTLILDVEGNDSKERGENRLTFEHRSALFSLALADCVIVNLWYHSLGNFTASNYGLLKTVMEVHLELFHQNVNCPKTILLFTVRDWFEEFAPLDIIREKIVDEYVNKIWCELKKSENSKNANIDDYFIIEVVGLSHGIIKKDEFLKDIKRLRHKWIYELRPINYSRNIPADGFAQYCNNIWNTIIKQSQLDIPSQQEMLATFRCQEIKNNVLNHISNTIKEKMVDSKNKYIENFKTWAEKDIIEKSLNEYLTDAARYQKIICLKTLEELLENLFIQLQIIVDNNLNFTQRILSSKFSKELNSMYSICTTDKSYFLFINDQNVDVTEQDENLSNVENIGENSKKGNQIKCINLWSNFLYNADMLEYTTIANFFDQYKKCSVEIIEPSISNNEDKDSQEKRNHDFNYKNSLTILATSIYKDTNRIRSVQCNILIERIRSTIKEELKNVDNMLITVKCSKDCWDYILKIVNKLEDYIYTNLSKCFINLKTGINTTYLNNGDNIYARLNTNCDYGLGYFQNEQITDFSDDAGKNDDEMDTEIDQNKNDMESLFNSKKFEIITKQNKKEKYVSTINNDLNKEMNNKKLISELKKFYTEIIIDALKIKLDEISNNIANIIINRFESVFNYDEIDQPRQWRNISAIELKNIFRVSKDYAFLIIEILQKNIKIDKIDNYLSTNFINTDIIEKGKIKAKKRIQEICRDAQYIQETGGHMSLKNVPFAFWVILLILGWNEILMFTRLFFRLNIILPMLIGFIIIVISCLYTGNAQILSYINKIIFIVIKNLYNFYKHLQTIGHQTTKPEKVE.

At 1–825 (MTDVNKTQII…ETGGHMSLKN (825 aa)) the chain is on the cytoplasmic side. The GB1/RHD3-type G domain occupies 33 to 288 (GFNYNVIAIL…IPADGFAQYC (256 aa)). A GTP-binding site is contributed by 43 to 50 (GSQSSGKS). Residues 826–846 (VPFAFWVILLILGWNEILMFT) traverse the membrane as a helical segment. Over 847-849 (RLF) the chain is Lumenal. A helical transmembrane segment spans residues 850 to 870 (FRLNIILPMLIGFIIIVISCL). Residues 871 to 913 (YTGNAQILSYINKIIFIVIKNLYNFYKHLQTIGHQTTKPEKVE) are Cytoplasmic-facing.

The protein belongs to the TRAFAC class dynamin-like GTPase superfamily. GB1/RHD3 GTPase family. RHD3 subfamily.

It is found in the endoplasmic reticulum membrane. In terms of biological role, probable GTP-binding protein involved in generating and maintaining the structure of the tubular endoplasmic reticulum network. The polypeptide is Protein SEY1 homolog (Plasmodium berghei (strain Anka)).